Reading from the N-terminus, the 94-residue chain is MEYNDILIAPVLTEKSTELREQGKYVFKVAPKATKIQIKEAVRRLFNVKVTDCTVVNVRGKTKRLRYKEGKTSSWKKATVKLAKGETIKIFEGA.

This sequence belongs to the universal ribosomal protein uL23 family. As to quaternary structure, part of the 50S ribosomal subunit. Contacts protein L29, and trigger factor when it is bound to the ribosome.

Its function is as follows. One of the early assembly proteins it binds 23S rRNA. One of the proteins that surrounds the polypeptide exit tunnel on the outside of the ribosome. Forms the main docking site for trigger factor binding to the ribosome. The polypeptide is Large ribosomal subunit protein uL23 (Treponema denticola (strain ATCC 35405 / DSM 14222 / CIP 103919 / JCM 8153 / KCTC 15104)).